Here is an 85-residue protein sequence, read N- to C-terminus: Protein C4 (85 aa).

Gly-2 carries the N-myristoyl glycine; by host lipid modification. The disordered stretch occupies residues 42-65; it reads LNPAPTSTPTSTRTETLSNGENSR. Low complexity predominate over residues 44-59; the sequence is PAPTSTPTSTRTETLS.

Belongs to the geminiviridae protein AC4/C4 family.

The protein localises to the host cell membrane. Its function is as follows. Pathogenicity determinant. May act as a suppressor of RNA-mediated gene silencing, also known as post-transcriptional gene silencing (PTGS), a mechanism of plant viral defense that limits the accumulation of viral RNAs. The protein is Protein C4 of Solanum lycopersicum (Tomato).